An 819-amino-acid chain; its full sequence is Leucine--tRNA ligase (819 aa).

The 'HIGH' region signature appears at 42–52 (PYPSGRLHMGH). The 'KMSKS' region motif lies at 577–581 (KMSKS). An ATP-binding site is contributed by K580.

The protein belongs to the class-I aminoacyl-tRNA synthetase family.

The protein resides in the cytoplasm. It carries out the reaction tRNA(Leu) + L-leucine + ATP = L-leucyl-tRNA(Leu) + AMP + diphosphate. This Saccharophagus degradans (strain 2-40 / ATCC 43961 / DSM 17024) protein is Leucine--tRNA ligase.